A 218-amino-acid chain; its full sequence is Large ribosomal subunit protein uL3 (218 aa).

The tract at residues 126–163 (HGFSRGPMTHGSKNHRQPGSIGAGTTPGRIYPGKRMSG) is disordered.

The protein belongs to the universal ribosomal protein uL3 family. As to quaternary structure, part of the 50S ribosomal subunit. Forms a cluster with proteins L14 and L19.

Its function is as follows. One of the primary rRNA binding proteins, it binds directly near the 3'-end of the 23S rRNA, where it nucleates assembly of the 50S subunit. The chain is Large ribosomal subunit protein uL3 from Synechococcus sp. (strain CC9311).